The primary structure comprises 278 residues: NAD-dependent protein deacylase (278 aa).

The region spanning 22–270 is the Deacetylase sirtuin-type domain; that stretch reads RSRIFHRDSA…PEYIREFLTT (249 aa). 46-65 lines the NAD(+) pocket; it reads GAGISAESGIRTFRADDGLW. Residues Tyr-90 and Arg-93 each coordinate substrate. 127–130 serves as a coordination point for NAD(+); the sequence is QNID. His-145 acts as the Proton acceptor in catalysis. Residues Cys-153 and Cys-172 each coordinate Zn(2+). NAD(+)-binding positions include 212 to 214, 238 to 240, and Ala-256; these read GTS and NLE.

The protein belongs to the sirtuin family. Class III subfamily. Zn(2+) serves as cofactor.

The protein localises to the cytoplasm. The catalysed reaction is N(6)-acetyl-L-lysyl-[protein] + NAD(+) + H2O = 2''-O-acetyl-ADP-D-ribose + nicotinamide + L-lysyl-[protein]. The enzyme catalyses N(6)-succinyl-L-lysyl-[protein] + NAD(+) + H2O = 2''-O-succinyl-ADP-D-ribose + nicotinamide + L-lysyl-[protein]. It catalyses the reaction N(6)-(2-hydroxyisobutanoyl)-L-lysyl-[protein] + NAD(+) + H2O = 2''-O-(2-hydroxyisobutanoyl)-ADP-D-ribose + nicotinamide + L-lysyl-[protein]. In terms of biological role, NAD-dependent lysine deacetylase that specifically removes acetyl groups on target proteins. Also acts as a protein-lysine deacylase by mediating protein desuccinylation and de-2-hydroxyisobutyrylation. Modulates the activities of several proteins which are inactive in their acylated form. The polypeptide is NAD-dependent protein deacylase (Yersinia pestis).